Consider the following 1281-residue polypeptide: Dynactin subunit 1 (1281 aa).

The disordered stretch occupies residues 1-26 (MAQSRRHMSSRTPSGSRMSTEASARP). The segment covering 10 to 22 (SRTPSGSRMSTEA) has biased composition (polar residues). The 43-residue stretch at 48–90 (GATLFATGKWVGVILDEAKGKNDGTVQGRKYFTCDEGHGIFVR) folds into the CAP-Gly domain. The segment at 100 to 221 (GADTTSPETP…SPSKEEEGLR (122 aa)) is disordered. Positions 102–114 (DTTSPETPDSSAS) are enriched in polar residues. 4 positions are modified to phosphothreonine: T108, T145, T146, and T147. Basic residues predominate over residues 129 to 152 (SKLRGLKPKKAPTARKTTTRRPKP). Residues 161–205 (AGPSSSLGPSGSASAGELSSSEPSTPAQTPLAAPIIPTPALTSPG) show a composition bias toward low complexity. Position 179 is a phosphoserine; by PLK1 (S179). S212 bears the Phosphoserine; by CDK1 mark. Coiled coils occupy residues 214–547 (SKEE…RQQQ), 943–1049 (LKLE…EGLR), and 1185–1214 (SAQL…KETV). An interaction with HPS6 region spans residues 911-1281 (EYDAERPPSK…LHQLHSRLIS (371 aa)).

It belongs to the dynactin 150 kDa subunit family. Monomer and homodimer. Subunit of dynactin, a multiprotein complex part of a tripartite complex with dynein and a adapter, such as BICDL1, BICD2 or HOOK3. The dynactin complex is built around ACTR1A/ACTB filament and consists of an actin-related filament composed of a shoulder domain, a pointed end and a barbed end. Its length is defined by its flexible shoulder domain. The soulder is composed of 2 DCTN1 subunits, 4 DCTN2 and 2 DCTN3. DCTN1/p150(glued) binds directly to microtubules and to cytoplasmic dynein. The 4 DCNT2 (via N-terminus) bind the ACTR1A filament and act as molecular rulers to determine the length. The pointed end is important for binding dynein-dynactin cargo adapters. Consists of 4 subunits: ACTR10, DCNT4, DCTN5 and DCTN6. The barbed end is composed of a CAPZA1:CAPZB heterodimers, which binds ACTR1A/ACTB filament and dynactin and stabilizes dynactin. Interacts with the C-terminus of MAPRE1, MAPRE2 and MAPRE3. Interacts with FBXL5. Interacts with ECPAS. Interacts with CLIP1. Interacts with CLN3 and DYNAP. Interacts with MISP; this interaction regulates its distribution at the cell cortex. Interacts with CEP131. Interacts with CEP126. Interacts with dynein intermediate chain and dynein heavy chain. Interacts with PLK1 (via POLO-box domain). Interacts with TBCB and PARD6A. Binds preferentially to tyrosinated microtubules than to detyrosinated microtubules. Interacts with KIF3A. Interacts with HPS6. Interacts with SNX6. Interacts with BICD2. Interacts with DST (isoform 1). Identified in a complex with MREG and RILP. Interacts with BCCIP. Interacts with DCDC1. Interacts with AKNA. Interacts with DYNC1I2. Interacts with RUFY3 and RUFY4. In terms of processing, ubiquitinated by a SCF complex containing FBXL5, leading to its degradation by the proteasome. Post-translationally, phosphorylation by SLK at Thr-145, Thr-146 and Thr-147 targets DCTN1 to the centrosome. It is uncertain if SLK phosphorylates all three threonines or one or two of them. PLK1-mediated phosphorylation at Ser-179 is essential for its localization in the nuclear envelope and promotes its dissociation from microtubules during early mitosis and positively regulates nuclear envelope breakdown during prophase.

The protein resides in the cytoplasm. It localises to the cytoskeleton. Its subcellular location is the microtubule organizing center. The protein localises to the centrosome. It is found in the centriole. The protein resides in the spindle. It localises to the nucleus envelope. Its subcellular location is the cell cortex. Functionally, part of the dynactin complex that activates the molecular motor dynein for ultra-processive transport along microtubules. Plays a key role in dynein-mediated retrograde transport of vesicles and organelles along microtubules by recruiting and tethering dynein to microtubules. Binds to both dynein and microtubules providing a link between specific cargos, microtubules and dynein. Essential for targeting dynein to microtubule plus ends, recruiting dynein to membranous cargos and enhancing dynein processivity (the ability to move along a microtubule for a long distance without falling off the track). Can also act as a brake to slow the dynein motor during motility along the microtubule. Can regulate microtubule stability by promoting microtubule formation, nucleation and polymerization and by inhibiting microtubule catastrophe in neurons. Inhibits microtubule catastrophe by binding both to microtubules and to tubulin, leading to enhanced microtubule stability along the axon. Plays a role in metaphase spindle orientation. Plays a role in centriole cohesion and subdistal appendage organization and function. Its recruitment to the centriole in a KIF3A-dependent manner is essential for the maintenance of centriole cohesion and the formation of subdistal appendage. Also required for microtubule anchoring at the mother centriole. Plays a role in primary cilia formation. This Mus musculus (Mouse) protein is Dynactin subunit 1 (Dctn1).